Consider the following 182-residue polypeptide: Ribulose bisphosphate carboxylase small subunit, chloroplastic 1 (182 aa).

A chloroplast-targeting transit peptide spans 1-42; sequence MASIMMNKSVVLSKECAKPLATPKVTLNKRGFATTIATKNRE.

This sequence belongs to the RuBisCO small chain family. As to quaternary structure, heterohexadecamer of 8 large and 8 small subunits.

The protein localises to the plastid. It localises to the chloroplast. Its function is as follows. RuBisCO catalyzes two reactions: the carboxylation of D-ribulose 1,5-bisphosphate, the primary event in carbon dioxide fixation, as well as the oxidative fragmentation of the pentose substrate. Both reactions occur simultaneously and in competition at the same active site. Although the small subunit is not catalytic it is essential for maximal activity. The sequence is that of Ribulose bisphosphate carboxylase small subunit, chloroplastic 1 from Acetabularia acetabulum (Mermaid's wine glass).